Reading from the N-terminus, the 765-residue chain is Lysyl oxidase homolog 2 (765 aa).

Residues 1–19 (MLVSHVFLLTLSLSVPSLG) form the signal peptide. SRCR domains are found at residues 49 to 150 (VRLA…VQCS), 179 to 293 (IRPI…VSCT), 317 to 416 (VRLR…VRCN), and 426 to 535 (VRLS…VSCV). Disulfide bonds link Cys-75-Cys-139, Cys-88-Cys-149, Cys-119-Cys-129, Cys-209-Cys-282, Cys-222-Cys-292, Cys-256-Cys-266, Cys-342-Cys-405, Cys-355-Cys-415, and Cys-386-Cys-396. N-linked (GlcNAc...) asparagine glycosylation occurs at Asn-279. Asn-446 carries an N-linked (GlcNAc...) asparagine glycan. Cystine bridges form between Cys-455–Cys-521, Cys-468–Cys-534, and Cys-502–Cys-512. The interval 539–742 (PDLVLNAALV…WMYNCHIGGS (204 aa)) is lysyl-oxidase like. Ca(2+) is bound by residues Asp-540 and Leu-541. 4 disulfide bridges follow: Cys-564/Cys-616, Cys-570/Cys-686, Cys-648/Cys-664, and Cys-654/Cys-676. Residues His-617, His-619, and His-621 each coordinate Cu cation. Asn-635 carries an N-linked (GlcNAc...) asparagine glycan. The lysine tyrosylquinone (Lys-Tyr) cross-link spans 644 to 680 (KASFCLEDSECEADIQKQYVCANFGEQGITVGCWDLY). Position 680 is a 2',4',5'-topaquinone (Tyr-680). Positions 713, 715, 718, and 719 each coordinate Ca(2+). A disulfide bond links Cys-723 and Cys-737.

It belongs to the lysyl oxidase family. It depends on Cu cation as a cofactor. Requires lysine tyrosylquinone residue as cofactor. The lysine tyrosylquinone cross-link (LTQ) is generated by condensation of the epsilon-amino group of a lysine with a topaquinone produced by oxidation of tyrosine.

The protein localises to the secreted. It is found in the extracellular space. Its subcellular location is the extracellular matrix. It localises to the basement membrane. The protein resides in the nucleus. The protein localises to the chromosome. It is found in the endoplasmic reticulum. It carries out the reaction L-lysyl-[protein] + O2 + H2O = (S)-2-amino-6-oxohexanoyl-[protein] + H2O2 + NH4(+). In terms of biological role, mediates the post-translational oxidative deamination of lysine residues on target proteins leading to the formation of deaminated lysine (allysine). Acts as a transcription corepressor and specifically mediates deamination of trimethylated 'Lys-4' of histone H3 (H3K4me3), a specific tag for epigenetic transcriptional activation. Shows no activity against histone H3 when it is trimethylated on 'Lys-9' (H3K9me3) or 'Lys-27' (H3K27me3) or when 'Lys-4' is monomethylated (H3K4me1) or dimethylated (H3K4me2). Also mediates deamination of methylated TAF10, a member of the transcription factor IID (TFIID) complex, which induces release of TAF10 from promoters, leading to inhibition of TFIID-dependent transcription. LOXL2-mediated deamination of TAF10 results in transcriptional repression of genes required for embryonic stem cell pluripotency. Involved in epithelial to mesenchymal transition (EMT) and participates in repression of E-cadherin, probably by mediating deamination of histone H3. When secreted into the extracellular matrix, promotes cross-linking of extracellular matrix proteins by mediating oxidative deamination of peptidyl lysine residues in precursors to fibrous collagen and elastin. Acts as a regulator of sprouting angiogenesis, probably via collagen IV scaffolding. Acts as a regulator of chondrocyte differentiation, probably by regulating expression of factors that control chondrocyte differentiation. The polypeptide is Lysyl oxidase homolog 2 (loxl2) (Xenopus laevis (African clawed frog)).